The following is a 216-amino-acid chain: uncharacterized protein (216 aa).

This is an uncharacterized protein from Escherichia coli (strain K12).